The primary structure comprises 517 residues: MFS efflux transporter inpD (517 aa).

Residues 1–24 (MEKTQTPSLTPDELSARSSTPFEE) form a disordered region. The next 5 membrane-spanning stretches (helical) occupy residues 37 to 57 (LKFS…ALSL), 59 to 79 (DIGW…LVFG), 89 to 109 (IVYL…ATAP), 112 to 132 (IALI…LSGA), and 151 to 171 (ILGA…GGII). A glycan (N-linked (GlcNAc...) asparagine) is linked at N172. Transmembrane regions (helical) follow at residues 178–198 (WIFY…VFLL), 219–239 (LPAF…LLWG), 247–267 (NARI…FMLV), 292–312 (FFSF…PIWL), 328–348 (LPII…TPVI), 352–372 (VPFM…LSTL), 381–401 (VLGF…QTLV), 412–432 (IPIG…IALS), and 485–505 (AIVK…IGVL).

Belongs to the major facilitator superfamily.

It localises to the cell membrane. MFS efflux transporter; part of the inp gene cluster that mediates the biosynthesis of fellutamide B, a mycotoxin that acts as a proteasome inhibitor. In the first step of fellutabmide B biosynthesis inpC activates 3-hydroxydodecanoic acid to generate 3-hydroxydodecanoyl-AMP that is then loaded onto the T0 domain of inpB. The 3-hydroxydodecanoyl-S-phosphopantetheinyl-T0 is sequentially extended with L-Asn and L-Gln by the two CAT modules of inpB. The linear lipodipeptide from inpB is then transferred onto inpA for the addition of the third amino acid, L-Leu. Reductive releasing of the lipotripeptide by the TE domain of inpA produces (2S)-fellutamide B. InpF might be involved in the release and transfer of the lipodipeptide from inpB to inpA. The inp cluster-encoded proteasome subunit inpE confers resistance to internally produced fellutamides. The MFS efflux transporter inpD may contribute to fellutamide resistance as well. The sequence is that of MFS efflux transporter inpD from Emericella nidulans (strain FGSC A4 / ATCC 38163 / CBS 112.46 / NRRL 194 / M139) (Aspergillus nidulans).